The sequence spans 130 residues: Large ribosomal subunit protein bL12 (130 aa).

Belongs to the bacterial ribosomal protein bL12 family. Homodimer. Part of the ribosomal stalk of the 50S ribosomal subunit. Forms a multimeric L10(L12)X complex, where L10 forms an elongated spine to which 2 to 4 L12 dimers bind in a sequential fashion. Binds GTP-bound translation factors.

In terms of biological role, forms part of the ribosomal stalk which helps the ribosome interact with GTP-bound translation factors. Is thus essential for accurate translation. This is Large ribosomal subunit protein bL12 from Nostoc sp. (strain PCC 7120 / SAG 25.82 / UTEX 2576).